The following is a 103-amino-acid chain: Co-chaperonin GroES (103 aa).

It belongs to the GroES chaperonin family. As to quaternary structure, heptamer of 7 subunits arranged in a ring. Interacts with the chaperonin GroEL.

The protein localises to the plastid. It localises to the cyanelle. Functionally, together with the chaperonin GroEL, plays an essential role in assisting protein folding. The GroEL-GroES system forms a nano-cage that allows encapsulation of the non-native substrate proteins and provides a physical environment optimized to promote and accelerate protein folding. GroES binds to the apical surface of the GroEL ring, thereby capping the opening of the GroEL channel. The sequence is that of Co-chaperonin GroES from Cyanophora paradoxa.